Here is a 349-residue protein sequence, read N- to C-terminus: Core protein VP7 (349 aa).

The N-linked (GlcNAc...) asparagine; by host glycan is linked to N45.

Belongs to the orbivirus VP7 family. As to quaternary structure, homotrimer.

The protein resides in the virion. In terms of biological role, major structural core protein; binds to structural protein VP3. Constitutes the surface of the AHSV core. This is Core protein VP7 (Segment-7) from African horse sickness virus 6 (AHSV-6).